Here is a 181-residue protein sequence, read N- to C-terminus: Oligoribonuclease (181 aa).

Residues 8 to 171 (LIWIDLEMTG…DDIRESVAEL (164 aa)) enclose the Exonuclease domain. Tyr129 is an active-site residue.

This sequence belongs to the oligoribonuclease family.

The protein localises to the cytoplasm. Its function is as follows. 3'-to-5' exoribonuclease specific for small oligoribonucleotides. The chain is Oligoribonuclease from Enterobacter sp. (strain 638).